A 214-amino-acid chain; its full sequence is 3-isopropylmalate dehydratase small subunit (214 aa).

Belongs to the LeuD family. LeuD type 1 subfamily. As to quaternary structure, heterodimer of LeuC and LeuD.

It catalyses the reaction (2R,3S)-3-isopropylmalate = (2S)-2-isopropylmalate. It functions in the pathway amino-acid biosynthesis; L-leucine biosynthesis; L-leucine from 3-methyl-2-oxobutanoate: step 2/4. In terms of biological role, catalyzes the isomerization between 2-isopropylmalate and 3-isopropylmalate, via the formation of 2-isopropylmaleate. This Pseudomonas putida (strain GB-1) protein is 3-isopropylmalate dehydratase small subunit.